The chain runs to 98 residues: Ig heavy chain V region 6.96 (98 aa).

The 98-residue stretch at 1–98 (EVQLVESGGG…EDTAMYYCAR (98 aa)) folds into the Ig-like domain.

In Mus musculus (Mouse), this protein is Ig heavy chain V region 6.96.